We begin with the raw amino-acid sequence, 122 residues long: MLSEFLKDYLPIIIFLIIALGLSCAFVVVNLILSPKHPDPEKLSAYECGFEPFEDSRMEFDVRFYLVAILFIIFDLEIAFLFPWAISLGNIGGLGFTSMMIFLFILTVGFIYEWKKGALDWE.

The next 3 helical transmembrane spans lie at 12–32 (IIIF…VNLI), 66–86 (LVAI…PWAI), and 91–111 (IGGL…VGFI).

Belongs to the complex I subunit 3 family. In terms of assembly, NDH-1 is composed of 14 different subunits. Subunits NuoA, H, J, K, L, M, N constitute the membrane sector of the complex.

It localises to the cell inner membrane. The catalysed reaction is a quinone + NADH + 5 H(+)(in) = a quinol + NAD(+) + 4 H(+)(out). In terms of biological role, NDH-1 shuttles electrons from NADH, via FMN and iron-sulfur (Fe-S) centers, to quinones in the respiratory chain. The immediate electron acceptor for the enzyme in this species is believed to be ubiquinone. Couples the redox reaction to proton translocation (for every two electrons transferred, four hydrogen ions are translocated across the cytoplasmic membrane), and thus conserves the redox energy in a proton gradient. This chain is NADH-quinone oxidoreductase subunit A, found in Pelagibacter ubique (strain HTCC1062).